The chain runs to 757 residues: Cell cycle progression protein 1 (757 aa).

The Cytoplasmic segment spans residues 1-217 (MSENSSDSDS…KRQFSSGLNK (217 aa)). Residues 1-308 (MSENSSDSDS…QKTNLATENQ (308 aa)) are interaction with MCF2L and SRC. The interval 152 to 207 (VFSSQPSDDESSSDETSNQPSPAFRRRRARKKTVSASESEDRLVAEQETEPSKELS) is disordered. Over residues 175 to 184 (FRRRRARKKT) the composition is skewed to basic residues. Serine 186 carries the post-translational modification Phosphoserine. Residues 190 to 207 (SEDRLVAEQETEPSKELS) show a composition bias toward basic and acidic residues. Residues 218-238 (CVILALVIAISMGFGHFYGTI) traverse the membrane as a helical; Signal-anchor for type II membrane protein segment. The Lumenal segment spans residues 239–757 (QIQKRQQLVR…YIKPCHYSSL (519 aa)). 2 coiled-coil regions span residues 248–272 (RKIHEDELNDMKDYLSQCQQEQESF) and 306–450 (ENQY…LWER). Positions 458-468 (QNGKQGTDGKK) are enriched in basic and acidic residues. The tract at residues 458–483 (QNGKQGTDGKKKGGRGSHRAKNKSKE) is disordered. The span at 469 to 479 (KGGRGSHRAKN) shows a compositional bias: basic residues. A coiled-coil region spans residues 504-530 (VRHHKEKIKQAKEAVKENLKKFSDSVK).

This sequence belongs to the CCPG1 family. In terms of assembly, interacts with MCF2L. May interact with MCF2, ARHGEF1, BCR, VAV1 and FGD1, but not with TIAM1. Interacts with GTP-bound CDC42 and SRC.

The protein localises to the cytoplasmic granule membrane. Functionally, acts as an assembly platform for Rho protein signaling complexes. Limits guanine nucleotide exchange activity of MCF2L toward RHOA, which results in an inhibition of both its transcriptional activation ability and its transforming activity. Does not inhibit activity of MCF2L toward CDC42, or activity of MCF2 toward either RHOA or CDC42. May be involved in cell cycle regulation. The polypeptide is Cell cycle progression protein 1 (CCPG1) (Homo sapiens (Human)).